The primary structure comprises 93 residues: YcgL domain-containing protein Spea_2443 (93 aa).

Residues 1–85 (MICAVYKSLR…PVVNLLEQHK (85 aa)) form the YcgL domain.

The polypeptide is YcgL domain-containing protein Spea_2443 (Shewanella pealeana (strain ATCC 700345 / ANG-SQ1)).